We begin with the raw amino-acid sequence, 107 residues long: uncharacterized protein (107 aa).

The helical transmembrane segment at 62–79 threads the bilayer; the sequence is LLVVIVYYFSHVGSFSLA.

It is found in the nucleus membrane. This is an uncharacterized protein from Schizosaccharomyces pombe (strain 972 / ATCC 24843) (Fission yeast).